Consider the following 208-residue polypeptide: Protein-L-isoaspartate O-methyltransferase (208 aa).

Serine 59 is an active-site residue.

The protein belongs to the methyltransferase superfamily. L-isoaspartyl/D-aspartyl protein methyltransferase family.

It is found in the cytoplasm. The enzyme catalyses [protein]-L-isoaspartate + S-adenosyl-L-methionine = [protein]-L-isoaspartate alpha-methyl ester + S-adenosyl-L-homocysteine. Catalyzes the methyl esterification of L-isoaspartyl residues in peptides and proteins that result from spontaneous decomposition of normal L-aspartyl and L-asparaginyl residues. It plays a role in the repair and/or degradation of damaged proteins. The polypeptide is Protein-L-isoaspartate O-methyltransferase (Sodalis glossinidius (strain morsitans)).